Here is a 130-residue protein sequence, read N- to C-terminus: Small ribosomal subunit protein uS8 (130 aa).

It belongs to the universal ribosomal protein uS8 family. Part of the 30S ribosomal subunit. Contacts proteins S5 and S12.

One of the primary rRNA binding proteins, it binds directly to 16S rRNA central domain where it helps coordinate assembly of the platform of the 30S subunit. This is Small ribosomal subunit protein uS8 from Pectobacterium carotovorum subsp. carotovorum (strain PC1).